A 133-amino-acid chain; its full sequence is MASKSVVVFLFLALVASSVVAQAPGPAPTISPLPATPTPSQSPRATAPAPSPSANPPPSAPTTAPPVSQPPTESPPAPPTSTSPSGAPGTNVPSGEAGPAQSPLSGSPNAAAVSRVSLVGTFAGVAVIAALLL.

An N-terminal signal peptide occupies residues 1–21 (MASKSVVVFLFLALVASSVVA). Residue Q22 is modified to Pyrrolidone carboxylic acid. Positions 23–110 (APGPAPTISP…QSPLSGSPNA (88 aa)) are disordered. The span at 25-37 (GPAPTISPLPATP) shows a compositional bias: pro residues. Over residues 38 to 48 (TPSQSPRATAP) the composition is skewed to low complexity. Positions 49–81 (APSPSANPPPSAPTTAPPVSQPPTESPPAPPTS) are enriched in pro residues. N109 is lipidated: GPI-anchor amidated asparagine. Positions 110–133 (AAAVSRVSLVGTFAGVAVIAALLL) are cleaved as a propeptide — removed in mature form.

It belongs to the classical AGP family. O-glycosylated on the hydroxyproline residues. In terms of tissue distribution, expressed at a low level in flowers and siliques.

It localises to the cell membrane. In terms of biological role, proteoglycan that seems to be implicated in diverse developmental roles such as differentiation, cell-cell recognition, embryogenesis and programmed cell death. This is Classical arabinogalactan protein 5 (AGP5) from Arabidopsis thaliana (Mouse-ear cress).